Reading from the N-terminus, the 722-residue chain is MPSPQTDTPGPELQSPKEAEEPQTPAQGSRRTSSRKEPNAHRKDGTRLGLGSLRQAFSRASQRALTQVSKEDTGLFRRSSCSLFRSFRQALNDGPATGHSQATPEVPSGVMNGVSQQASTGAASEELKPEAEGKSVADLITERQLLAAFEQLLRLETLLVAEKASRTFEQDPTAFARRAMDVCLLYDGLAAEIGAIVRETLDSDGVDAAALAELARVVSAEEEAHPSPPDDGDFLRTPRRWRQHWEEAVRRSAQERVRRPGAGWAFGEAEGASGLAQLLAELGGLVRRDLQKVRQEVQPAYAAAGFPAWEVYLRAFHSAVAQRLQELARDARGCEQLYILLDWAANVYGSPDFLGAPGLALPAEPLPPLLAPDVWARLESDYTSFLEAKIASCFDSILQLEQSHWAAAEVPEVLQGLYQAPLSMDVHMLVAEHVKAAGAISAELEATTLRICTRALGLFVPRFEKAFLASEAVSEPHLGAYINACEELRTSLLSRFPGTQEELEKPLVTATCSFQKHLLQGLQRELQPLFRVVCTRDWLTQDWLHPLMDKVVTFAGHLQRVARPRAQETLQEVHRFVVREYLARALRPRERFRGMERMHGSQKMSLDAQAISDTFQGLGSEATWLDQAIQCVAEILGETYKDDIQRHLETLIRSYPDIRRDHILAILALRRLGRQRNQHLLQHTQDLLRAAAGAAGAEAPRGRVLFEEIKVPSAMAVLITCV.

2 disordered regions span residues 1–53 (MPSP…LGSL) and 92–131 (NDGP…KPEA). Residues 34–46 (SRKEPNAHRKDGT) show a composition bias toward basic and acidic residues. At serine 52 the chain carries Phosphoserine. A compositionally biased stretch (polar residues) spans 113 to 122 (GVSQQASTGA). Serine 513 carries the post-translational modification Phosphoserine.

This sequence belongs to the SEC6 family.

The protein is Exocyst complex component 3-like protein 4 (EXOC3L4) of Homo sapiens (Human).